Reading from the N-terminus, the 393-residue chain is S-adenosylmethionine synthase 3 (393 aa).

Residue E9 participates in Mg(2+) binding. Position 15 (H15) interacts with ATP. Residue E43 coordinates K(+). 2 residues coordinate L-methionine: E56 and Q99. Residues 167-169 (NGK), 235-238 (SGRF), D246, 252-253 (RK), A269, K273, and K277 each bind ATP. D246 lines the L-methionine pocket. K277 is an L-methionine binding site.

Belongs to the AdoMet synthase family. Homotetramer. Requires Mn(2+) as cofactor. Mg(2+) serves as cofactor. Co(2+) is required as a cofactor. The cofactor is K(+). In terms of tissue distribution, mostly expressed in flowers, seedpods and roots, and, to a lower extent, in stems and leaves.

It is found in the cytoplasm. It catalyses the reaction L-methionine + ATP + H2O = S-adenosyl-L-methionine + phosphate + diphosphate. It participates in amino-acid biosynthesis; S-adenosyl-L-methionine biosynthesis; S-adenosyl-L-methionine from L-methionine: step 1/1. Its function is as follows. Catalyzes the formation of S-adenosylmethionine from methionine and ATP. The reaction comprises two steps that are both catalyzed by the same enzyme: formation of S-adenosylmethionine (AdoMet) and triphosphate, and subsequent hydrolysis of the triphosphate. The chain is S-adenosylmethionine synthase 3 (MSAMS3) from Brassica juncea (Indian mustard).